Reading from the N-terminus, the 236-residue chain is ATP synthase subunit a, chloroplastic (236 aa).

A run of 5 helical transmembrane segments spans residues 25–45, 87–107, 123–143, 180–202, and 210–230; these read MHGQ…AFAV, FIGT…LIPW, DINT…YAGL, LFGN…PLVI, and GLFT…AYIG.

This sequence belongs to the ATPase A chain family. F-type ATPases have 2 components, CF(1) - the catalytic core - and CF(0) - the membrane proton channel. CF(1) has five subunits: alpha(3), beta(3), gamma(1), delta(1), epsilon(1). CF(0) has four main subunits: a, b, b' and c.

The protein resides in the plastid. Its subcellular location is the chloroplast thylakoid membrane. Functionally, key component of the proton channel; it plays a direct role in the translocation of protons across the membrane. This chain is ATP synthase subunit a, chloroplastic, found in Ostreococcus tauri.